We begin with the raw amino-acid sequence, 148 residues long: Protein Turandot Z (148 aa).

The signal sequence occupies residues methionine 1–alanine 23.

This sequence belongs to the Turandot family.

It is found in the secreted. A humoral factor that may play a role in stress tolerance. The chain is Protein Turandot Z from Drosophila simulans (Fruit fly).